We begin with the raw amino-acid sequence, 343 residues long: tRNA N6-adenosine threonylcarbamoyltransferase (343 aa).

Residues H111 and H115 each contribute to the Fe cation site. Substrate contacts are provided by residues 135 to 139 (VLSGG), D168, G181, and N280. A Fe cation-binding site is contributed by D306.

Belongs to the KAE1 / TsaD family. Fe(2+) is required as a cofactor.

The protein resides in the cytoplasm. It catalyses the reaction L-threonylcarbamoyladenylate + adenosine(37) in tRNA = N(6)-L-threonylcarbamoyladenosine(37) in tRNA + AMP + H(+). In terms of biological role, required for the formation of a threonylcarbamoyl group on adenosine at position 37 (t(6)A37) in tRNAs that read codons beginning with adenine. Is involved in the transfer of the threonylcarbamoyl moiety of threonylcarbamoyl-AMP (TC-AMP) to the N6 group of A37, together with TsaE and TsaB. TsaD likely plays a direct catalytic role in this reaction. The sequence is that of tRNA N6-adenosine threonylcarbamoyltransferase from Protochlamydia amoebophila (strain UWE25).